The sequence spans 261 residues: Cytochrome c oxidase subunit 3 (261 aa).

Residues 1-15 (MTHQSHAYHMVKPSP) lie on the Mitochondrial matrix side of the membrane. The chain crosses the membrane as a helical span at residues 16–34 (WPLTGALSALLMTSGLAMW). Topologically, residues 35–40 (FHFHSM) are mitochondrial intermembrane. A helical membrane pass occupies residues 41–66 (TLLMLGLLTNTLTMYQWWRDVTREST). Residues 67-72 (YQGHHT) lie on the Mitochondrial matrix side of the membrane. The helical transmembrane segment at 73–105 (PPVQKGLRYGMILFITSEVFFFAGFFWAFYHSS) threads the bilayer. The Mitochondrial intermembrane segment spans residues 106-128 (LAPTPQLGGHWPPTGITPLNPLE). Residues 129-152 (VPLLNTSVLLASGVSITWAHHSLM) form a helical membrane-spanning segment. At 153–155 (ENN) the chain is on the mitochondrial matrix side. Residues 156–183 (RNQMIQALLITILLGLYFTLLQASEYFE) traverse the membrane as a helical segment. Residues 184–190 (SPFTISD) lie on the Mitochondrial intermembrane side of the membrane. A helical membrane pass occupies residues 191 to 223 (GIYGSTFFVATGFHGLHVIIGSTFLTICFIRQL). The Mitochondrial matrix segment spans residues 224–232 (MFHFTSKHH). The helical transmembrane segment at 233 to 256 (FGFEAAAWYWHFVDVVWLFLYVSI) threads the bilayer. The Mitochondrial intermembrane portion of the chain corresponds to 257–261 (YWWGS).

Belongs to the cytochrome c oxidase subunit 3 family. As to quaternary structure, component of the cytochrome c oxidase (complex IV, CIV), a multisubunit enzyme composed of 14 subunits. The complex is composed of a catalytic core of 3 subunits MT-CO1, MT-CO2 and MT-CO3, encoded in the mitochondrial DNA, and 11 supernumerary subunits COX4I1 (or COX4I2), COX5A, COX5B, COX6A1 (or COX6A2), COX6B1 (or COX6B2), COX6C, COX7A2 (or COX7A1), COX7B, COX7C, COX8A and NDUFA4, which are encoded in the nuclear genome. The complex exists as a monomer or a dimer and forms supercomplexes (SCs) in the inner mitochondrial membrane with NADH-ubiquinone oxidoreductase (complex I, CI) and ubiquinol-cytochrome c oxidoreductase (cytochrome b-c1 complex, complex III, CIII), resulting in different assemblies (supercomplex SCI(1)III(2)IV(1) and megacomplex MCI(2)III(2)IV(2)).

It is found in the mitochondrion inner membrane. It carries out the reaction 4 Fe(II)-[cytochrome c] + O2 + 8 H(+)(in) = 4 Fe(III)-[cytochrome c] + 2 H2O + 4 H(+)(out). Component of the cytochrome c oxidase, the last enzyme in the mitochondrial electron transport chain which drives oxidative phosphorylation. The respiratory chain contains 3 multisubunit complexes succinate dehydrogenase (complex II, CII), ubiquinol-cytochrome c oxidoreductase (cytochrome b-c1 complex, complex III, CIII) and cytochrome c oxidase (complex IV, CIV), that cooperate to transfer electrons derived from NADH and succinate to molecular oxygen, creating an electrochemical gradient over the inner membrane that drives transmembrane transport and the ATP synthase. Cytochrome c oxidase is the component of the respiratory chain that catalyzes the reduction of oxygen to water. Electrons originating from reduced cytochrome c in the intermembrane space (IMS) are transferred via the dinuclear copper A center (CU(A)) of subunit 2 and heme A of subunit 1 to the active site in subunit 1, a binuclear center (BNC) formed by heme A3 and copper B (CU(B)). The BNC reduces molecular oxygen to 2 water molecules using 4 electrons from cytochrome c in the IMS and 4 protons from the mitochondrial matrix. The polypeptide is Cytochrome c oxidase subunit 3 (MT-CO3) (Homo sapiens (Human)).